Reading from the N-terminus, the 403-residue chain is MASLDSLPAMKLVRFILSTLLVTSVNSQTQCRNFKSIISFGDSIADTGNLLGLSDPNDLPASAFPPYGETFFHHPTGRYSDGRLIIDFIAEFLGFPLVPPFYGCQNANFKKGVNFAVAGATALEPSFLEERGIHSTITNVSLSVQLRSFTESLPNLCGSPSDCRDMIENALILMGEIGGNDYNFALFQRKPVKEVEELVPFVIATISSAITELVCMGGRTFLVPGNFPIGYSASYLTLYKTSNKEEYDPLTGCLKWLNDFSEYYNKQLQEELNGLRKLYPHVNIIYADYYNALLRLFQEPAKFGFMNRPLPACCGVGGSYNFNFSRRCGSVGVEYCDDPSQYVNYDGIHMTEAAYRLISEGLLKGPYAIPPFKWSCLSSEIMNKMSLDTQILDEQLLQGCLKV.

The first 27 residues, 1-27 (MASLDSLPAMKLVRFILSTLLVTSVNS), serve as a signal peptide directing secretion. The active-site Nucleophile is Ser-43. Residues Asn-139 and Asn-323 are each glycosylated (N-linked (GlcNAc...) asparagine). Residues Asp-346 and His-349 contribute to the active site.

Belongs to the 'GDSL' lipolytic enzyme family.

Its subcellular location is the secreted. The polypeptide is GDSL esterase/lipase At1g28590 (Arabidopsis thaliana (Mouse-ear cress)).